Reading from the N-terminus, the 100-residue chain is Urease subunit gamma (100 aa).

The protein belongs to the urease gamma subunit family. As to quaternary structure, heterotrimer of UreA (gamma), UreB (beta) and UreC (alpha) subunits. Three heterotrimers associate to form the active enzyme. The apoenzyme interacts with an accessory complex composed of UreD, UreF and UreG, which is required for the assembly of the nickel containing metallocenter of UreC. The UreE protein may also play a direct role as a metallochaperone in nickel transfer to the urease apoprotein.

Its subcellular location is the cytoplasm. It carries out the reaction urea + 2 H2O + H(+) = hydrogencarbonate + 2 NH4(+). It participates in nitrogen metabolism; urea degradation; CO(2) and NH(3) from urea (urease route): step 1/1. Its activity is regulated as follows. The apoenzyme can be activated in vitro in the presence of nickel ions and carbon dioxide, which promotes carbamylation of 'Lys-217' of the UreC (alpha) subunit. This is Urease subunit gamma from Klebsiella aerogenes (Enterobacter aerogenes).